A 99-amino-acid chain; its full sequence is DNA-binding protein HU (99 aa).

The disordered stretch occupies residues 67–86 (REGRNPKTGAKMKIDAYNQP).

Belongs to the bacterial histone-like protein family. Homodimer.

Histone-like DNA-binding protein which is capable of wrapping DNA to stabilize it, and thus to prevent its denaturation under extreme environmental conditions. The sequence is that of DNA-binding protein HU (hup) from Rickettsia conorii (strain ATCC VR-613 / Malish 7).